Consider the following 726-residue polypeptide: ORC ubiquitin ligase 1 (726 aa).

An RING-type; degenerate zinc finger spans residues 18-56; that stretch reads CHICLGKVRQPVICINNHVFCSICIDLWLKNNSQCPACR. Coiled-coil stretches lie at residues 87-129 and 155-270; these read LRKT…TILD and ETVA…MNSI. Position 210 is a phosphoserine (Ser-210). A disordered region spans residues 274-335; it reads ALPADGKGSK…ARQESTSKAE (62 aa). Basic and acidic residues predominate over residues 280 to 290; sequence KGSKGSEEDVA. Residues 300–320 are compositionally biased toward low complexity; the sequence is KQPSSSTSSSSHLAKPSSSRL. Over residues 321–334 the composition is skewed to polar residues; it reads CDTSSARQESTSKA. A phosphoserine mark is found at Ser-526, Ser-553, Ser-561, Ser-568, Ser-570, Ser-719, and Ser-721. Residues 687–726 form a disordered region; sequence QSPWSTSFVPEKRNKNVNQSTKRKIQSSLSNASPSKATKS. Residues 702–726 show a composition bias toward polar residues; sequence NVNQSTKRKIQSSLSNASPSKATKS.

Associates with ORC complex. Binds to chromatin; association is cell cycle-regulated, absent from mitotic chromosomes, is associated with chromatin from G1 and partially released from chromatin from mid S-phase. In terms of processing, auto-ubiquitinated.

It is found in the chromosome. The catalysed reaction is S-ubiquitinyl-[E2 ubiquitin-conjugating enzyme]-L-cysteine + [acceptor protein]-L-lysine = [E2 ubiquitin-conjugating enzyme]-L-cysteine + N(6)-ubiquitinyl-[acceptor protein]-L-lysine.. In terms of biological role, E3 ubiquitin ligase essential for DNA replication origin activation during S phase. Acts as a replication origin selector which selects the origins to be fired and catalyzes the multi-mono-ubiquitination of a subset of chromatin-bound ORC3 and ORC5 during S-phase. The sequence is that of ORC ubiquitin ligase 1 (OBI1) from Pongo abelii (Sumatran orangutan).